Reading from the N-terminus, the 575-residue chain is Alpha-humulene synthase (575 aa).

Asp-325, Asp-329, Asp-469, and Glu-477 together coordinate Mg(2+). The DDXXD motif motif lies at 325-329; that stretch reads DDLYD.

This sequence belongs to the terpene synthase family. Tpsa subfamily. Mg(2+) serves as cofactor. Requires Mn(2+) as cofactor.

It catalyses the reaction (2E,6E)-farnesyl diphosphate = alpha-humulene + diphosphate. The protein operates within sesquiterpene biosynthesis. It functions in the pathway terpene metabolism; oleoresin biosynthesis. In terms of biological role, terpene synthase (TPS) involved in the biosynthesis of sesquiterpene natural products included in conifer oleoresin secretions and volatile emissions; these compounds contribute to biotic and abiotic stress defense against herbivores and pathogens. Catalyzes the conversion of (2E,6E)-farnesyl diphosphate (FPP) to (1E,4E,8E)-alpha-humulene. This is Alpha-humulene synthase from Picea glauca (White spruce).